We begin with the raw amino-acid sequence, 204 residues long: ADP-ribosylation factor-like protein 15 (204 aa).

Residues 39–46, 82–86, and 142–145 contribute to the GTP site; these read GLTGSGKT, ELGGA, and NHQD.

It belongs to the small GTPase superfamily. Arf family.

The sequence is that of ADP-ribosylation factor-like protein 15 (ARL15) from Homo sapiens (Human).